We begin with the raw amino-acid sequence, 208 residues long: Small ribosomal subunit protein uS4 (208 aa).

In terms of domain architecture, S4 RNA-binding spans 98–159 (RRLDNVAYRL…KSRKVAAISE (62 aa)).

Belongs to the universal ribosomal protein uS4 family. As to quaternary structure, part of the 30S ribosomal subunit. Contacts protein S5. The interaction surface between S4 and S5 is involved in control of translational fidelity.

One of the primary rRNA binding proteins, it binds directly to 16S rRNA where it nucleates assembly of the body of the 30S subunit. Functionally, with S5 and S12 plays an important role in translational accuracy. This Geobacter sp. (strain M21) protein is Small ribosomal subunit protein uS4.